Here is a 169-residue protein sequence, read N- to C-terminus: Transcription regulatory protein SNF11 (169 aa).

Residues 1–24 (MSSEIAYSNTNTNTENENRNTGAG) form a disordered region. Residue S2 is modified to N-acetylserine. Positions 9-21 (NTNTNTENENRNT) are enriched in low complexity. 8 tandem repeats follow at residues 28 to 31 (NTNA), 32 to 35 (NANA), 36 to 39 (NATA), 40 to 43 (NATA), 44 to 47 (NATA), 48 to 51 (NATA), 76 to 80 (LLARV), and 160 to 165 (LLLARV). Residues 28-51 (NTNANANANATANATANATANATA) form a 6 X 4 AA tandem repeats of N-[AT]-[NT]-A region. The tract at residues 76 to 165 (LLARVIQMNN…SKLYLLLARV (90 aa)) is 2 X 5 AA repeats of L-L-A-R-V.

In terms of assembly, component of the SWI/SNF global transcription activator complex. The 1.14 MDa SWI/SNF complex is composed of 11 different subunits: one copy each of SWI1, SNF2/SWI2, SNF5, SNF12/SWP73, ARP7/SWP61, ARP9/SWP59; two copies each of SWI3, SNF6, SNF11, SWP82; and three copies of TAF14/SWP29.

The protein resides in the nucleus. In terms of biological role, involved in transcriptional activation. Component of the SWI/SNF complex, an ATP-dependent chromatin remodeling complex, which is required for the positive and negative regulation of gene expression of a large number of genes. It changes chromatin structure by altering DNA-histone contacts within a nucleosome, leading eventually to a change in nucleosome position, thus facilitating or repressing binding of gene-specific transcription factors. This is Transcription regulatory protein SNF11 (SNF11) from Saccharomyces cerevisiae (strain ATCC 204508 / S288c) (Baker's yeast).